The primary structure comprises 70 residues: Enhancer of split m6 protein (70 aa).

This is Enhancer of split m6 protein from Drosophila melanogaster (Fruit fly).